Reading from the N-terminus, the 288-residue chain is Diaminopimelate epimerase (288 aa).

Substrate-binding residues include N14 and N67. C76 acts as the Proton donor in catalysis. Substrate-binding positions include 77 to 78 (GN), N166, N199, and 217 to 218 (ER). C226 serves as the catalytic Proton acceptor. 227–228 (GT) serves as a coordination point for substrate.

It belongs to the diaminopimelate epimerase family. Homodimer.

It localises to the cytoplasm. It carries out the reaction (2S,6S)-2,6-diaminopimelate = meso-2,6-diaminopimelate. It participates in amino-acid biosynthesis; L-lysine biosynthesis via DAP pathway; DL-2,6-diaminopimelate from LL-2,6-diaminopimelate: step 1/1. Functionally, catalyzes the stereoinversion of LL-2,6-diaminopimelate (L,L-DAP) to meso-diaminopimelate (meso-DAP), a precursor of L-lysine and an essential component of the bacterial peptidoglycan. In Bacillus thuringiensis (strain Al Hakam), this protein is Diaminopimelate epimerase.